Reading from the N-terminus, the 338-residue chain is uncharacterized protein (338 aa).

Residues 1–72 (MASPPILSRE…LNPVEDYDSK (72 aa)) are disordered. Residues 24–38 (GGNSEVNIDPSASSS) are compositionally biased toward polar residues. The span at 49–58 (ADTKIDPHLL) shows a compositional bias: basic and acidic residues. The segment covering 59 to 68 (EEDDLNPVED) has biased composition (acidic residues).

The protein localises to the cytoplasm. The protein resides in the nucleus. This is an uncharacterized protein from Schizosaccharomyces pombe (strain 972 / ATCC 24843) (Fission yeast).